Here is a 259-residue protein sequence, read N- to C-terminus: Ubiquitin-conjugating enzyme E2 J2 (259 aa).

Over 1-226 (MSSNSVKRAP…AGLQQANRHH (226 aa)) the chain is Cytoplasmic. The region spanning 12-162 (TATQRLKQDY…DKVFCELFPE (151 aa)) is the UBC core domain. C94 acts as the Glycyl thioester intermediate in catalysis. The segment at 174–200 (QDELSSRPQALPLPDVVPDGETHHGQH) is disordered. Residues 227–247 (GLLGGALANLFVIVGFAAFAY) form a helical; Anchor for type IV membrane protein membrane-spanning segment. The Lumenal segment spans residues 248–259 (TVKYVLRSIAQE).

The protein belongs to the ubiquitin-conjugating enzyme family.

It localises to the endoplasmic reticulum membrane. The enzyme catalyses S-ubiquitinyl-[E1 ubiquitin-activating enzyme]-L-cysteine + [E2 ubiquitin-conjugating enzyme]-L-cysteine = [E1 ubiquitin-activating enzyme]-L-cysteine + S-ubiquitinyl-[E2 ubiquitin-conjugating enzyme]-L-cysteine.. Its pathway is protein modification; protein ubiquitination. Functionally, catalyzes the covalent attachment of ubiquitin to other proteins. Seems to function in the selective degradation of misfolded membrane proteins from the endoplasmic reticulum (ERAD). In cooperation with the GATOR2 complex, catalyzes 'Lys-6'-linked ubiquitination of NPRL2. This Bos taurus (Bovine) protein is Ubiquitin-conjugating enzyme E2 J2 (UBE2J2).